Consider the following 837-residue polypeptide: MKVSLSWLNELVDIHCDVEELADSLSMAGFEVEELIDLSASLEGIVTGYVIDISPHPNADKLSVCKVDIGKSEAIQIVCGAKNIRSGIHVLVATEGTYLKDIDLTIKTSHLRGQISQGMICSLSELGLPPNNDGIAILEEMNIAIPKIGVCPKKQLGLDEIIFDLAITANRPDGLSMVGIAREVSAINNTKLKLPAIDLLHKDYKEFDHNVESKKFASRNEVYSLNLIDNLNGNNDSSEEVKSRLRNAGINSINAIVDLTNYTMLEQGQPLHAFDADLLCELTGKEVTINDFGIRKAKTGENLIGIDGIDYSLSSKVDVITCSNIIIAIAGIIGGKNSCVNKETRKIWLEAALFSPSSVRISSREIGKRTESSTRFEKGISPEITISSVERCLNLLTKTFDCQILEKWINRELVIEEQLLLLRREKINKTLGKVVEHKTNINAGDNSNNIDKSGESQINTLRNIDDHEIEQSLISLGCKLQKDVKGWLVEVPANRKLDLKREIDLIEEISRLIGYDRFDSNLPNPLRPGGLTPKQKIERKVRESLTSVGFQEVVTLSLVAKDQYSKNQVAISNPLLSETSHLRTNLWQEHLNICQRNMAYEQKGCWIYEIGKIYNIDSGRINETSLLCGALVGNKSIGQWQTETKNSSLDYFQSRGILHSALNSLNINITDEKLDENQLLHPGKSSMLKLEGKELGFFGELHPSKLSDLNIDYPIYIFELNFNLILQSSTRKNKLNISFKQFPTVPSMERDIALLVDNNIQSLDISNLIIKTGRPLVEDAYLIDRYEGDNIPKGKVSQAFRIRYRKNKDTLKEEEVSPIHDKIREKLKVEFSAELRS.

In terms of domain architecture, tRNA-binding spans serine 39–glycine 149. The B5 domain maps to isoleucine 415–serine 520. Residues aspartate 498, aspartate 504, glutamate 507, and glutamate 508 each coordinate Mg(2+). Residues proline 743–arginine 836 enclose the FDX-ACB domain.

Belongs to the phenylalanyl-tRNA synthetase beta subunit family. Type 1 subfamily. As to quaternary structure, tetramer of two alpha and two beta subunits. Requires Mg(2+) as cofactor.

Its subcellular location is the cytoplasm. It carries out the reaction tRNA(Phe) + L-phenylalanine + ATP = L-phenylalanyl-tRNA(Phe) + AMP + diphosphate + H(+). This Prochlorococcus marinus (strain SARG / CCMP1375 / SS120) protein is Phenylalanine--tRNA ligase beta subunit.